Here is a 72-residue protein sequence, read N- to C-terminus: ATP synthase protein 8 (72 aa).

A helical membrane pass occupies residues 16–36 (WTLIALFLLFSFLVVSVLPAV).

It belongs to the ATPase protein 8 family. As to quaternary structure, F-type ATPases have 2 components, CF(1) - the catalytic core - and CF(0) - the membrane proton channel.

It is found in the mitochondrion membrane. In terms of biological role, mitochondrial membrane ATP synthase (F(1)F(0) ATP synthase or Complex V) produces ATP from ADP in the presence of a proton gradient across the membrane which is generated by electron transport complexes of the respiratory chain. F-type ATPases consist of two structural domains, F(1) - containing the extramembraneous catalytic core and F(0) - containing the membrane proton channel, linked together by a central stalk and a peripheral stalk. During catalysis, ATP synthesis in the catalytic domain of F(1) is coupled via a rotary mechanism of the central stalk subunits to proton translocation. Part of the complex F(0) domain. Minor subunit located with subunit a in the membrane. This Metridium senile (Brown sea anemone) protein is ATP synthase protein 8 (MTATP8).